Here is a 572-residue protein sequence, read N- to C-terminus: Proline--tRNA ligase (572 aa).

The protein belongs to the class-II aminoacyl-tRNA synthetase family. ProS type 1 subfamily. As to quaternary structure, homodimer.

The protein localises to the cytoplasm. It carries out the reaction tRNA(Pro) + L-proline + ATP = L-prolyl-tRNA(Pro) + AMP + diphosphate. Catalyzes the attachment of proline to tRNA(Pro) in a two-step reaction: proline is first activated by ATP to form Pro-AMP and then transferred to the acceptor end of tRNA(Pro). As ProRS can inadvertently accommodate and process non-cognate amino acids such as alanine and cysteine, to avoid such errors it has two additional distinct editing activities against alanine. One activity is designated as 'pretransfer' editing and involves the tRNA(Pro)-independent hydrolysis of activated Ala-AMP. The other activity is designated 'posttransfer' editing and involves deacylation of mischarged Ala-tRNA(Pro). The misacylated Cys-tRNA(Pro) is not edited by ProRS. This chain is Proline--tRNA ligase, found in Salmonella schwarzengrund (strain CVM19633).